The sequence spans 442 residues: tRNA modification GTPase MnmE (442 aa).

The (6S)-5-formyl-5,6,7,8-tetrahydrofolate site is built by arginine 21, glutamate 79, and lysine 118. Positions 214–367 constitute a TrmE-type G domain; the sequence is GFKIAIVGKP…LKEELQNYLN (154 aa). Residue asparagine 224 participates in K(+) binding. GTP contacts are provided by residues 224 to 229, 243 to 249, and 268 to 271; these read NVGKSS, SDIAGTT, and DTAG. Serine 228 serves as a coordination point for Mg(2+). The K(+) site is built by serine 243, isoleucine 245, and threonine 248. Residue threonine 249 coordinates Mg(2+). Residue lysine 442 participates in (6S)-5-formyl-5,6,7,8-tetrahydrofolate binding.

The protein belongs to the TRAFAC class TrmE-Era-EngA-EngB-Septin-like GTPase superfamily. TrmE GTPase family. Homodimer. Heterotetramer of two MnmE and two MnmG subunits. The cofactor is K(+).

It localises to the cytoplasm. Its function is as follows. Exhibits a very high intrinsic GTPase hydrolysis rate. Involved in the addition of a carboxymethylaminomethyl (cmnm) group at the wobble position (U34) of certain tRNAs, forming tRNA-cmnm(5)s(2)U34. The protein is tRNA modification GTPase MnmE of Campylobacter jejuni (strain RM1221).